We begin with the raw amino-acid sequence, 290 residues long: Putative neuropeptide Y receptor type 6 (290 aa).

Topologically, residues 1–39 (MEVSLNHPASNTTSTKNNNSAFFYFESCQPPSPALLLLC) are extracellular. N-linked (GlcNAc...) asparagine glycosylation occurs at Asn-11. The chain crosses the membrane as a helical span at residues 40-60 (IAYTVVLIVGLFGNLSLIIII). Residues 61–83 (FKKQRKAQNFTSILIANLSLSDT) are Cytoplasmic-facing. The chain crosses the membrane as a helical span at residues 84-104 (LVCVMCIHFTIIYTLMDHWIF). The Extracellular segment spans residues 105–111 (GDTMCRL). Cys-109 and Cys-196 form a disulfide bridge. Residues 112–132 (TSYVQSVSISVSIFSLVFTAV) form a helical membrane-spanning segment. At 133–150 (ERYQLIVNPRGWKPSVTH) the chain is on the cytoplasmic side. The chain crosses the membrane as a helical span at residues 151-171 (AYWGITLIWLFSLLLSIPFFL). Residues 172-206 (SYHLTDEPFRNLSLPTDLYTHQVACVENWPSKKDR) lie on the Extracellular side of the membrane. Residues 207 to 227 (LLFTTSLFLLQYFVPLGFILI) traverse the membrane as a helical segment. Residues 228–258 (CYLKIVICLRRRNAKVDKKKENEGRLNENKR) are Cytoplasmic-facing. Residues 259 to 279 (INTMLISIVVTFGACWLPRIS) traverse the membrane as a helical segment. Residues 280–290 (SMSSLTGIMRC) lie on the Extracellular side of the membrane.

Belongs to the G-protein coupled receptor 1 family. In terms of tissue distribution, expressed in heart, skeletal muscle, gastrointestinal tissues, spleen, brain and adrenal glands.

The protein localises to the membrane. In terms of biological role, when expressed, is unable to bind pancreatic polypeptide (PP), neuropeptide Y (NPY), or peptide YY (PYY), suggesting that either it is functionally inactive or that it may have acquired a pancreatic polypeptide-independent function. The polypeptide is Putative neuropeptide Y receptor type 6 (NPY6R) (Homo sapiens (Human)).